Reading from the N-terminus, the 894-residue chain is Nitrate reductase [NADPH] (894 aa).

Residues 1 to 79 are disordered; that stretch reads MAVKSQLGVT…PEDLKTPDHR (79 aa). A compositionally biased stretch (polar residues) spans 7-16; that stretch reads LGVTYTTKTF. Residues 69–79 are compositionally biased toward basic and acidic residues; sequence LPEDLKTPDHR. A Mo-molybdopterin-binding site is contributed by C169. Positions 535–610 constitute a Cytochrome b5 heme-binding domain; the sequence is VRIISLEELK…MPQYHIGTLN (76 aa). The heme site is built by H570 and H593. Residues 638–749 enclose the FAD-binding FR-type domain; the sequence is KYWSKAILET…KGPVGKFEYL (112 aa). FAD is bound by residues 692–695, 709–713, 723–725, S773, and T776; these read RAYT, LIKIY, and KMT.

The protein belongs to the nitrate reductase family. Homodimer. Requires FAD as cofactor. Heme serves as cofactor. Mo-molybdopterin is required as a cofactor.

It catalyses the reaction nitrite + NADP(+) + H2O = nitrate + NADPH + H(+). Nitrate reductase is a key enzyme involved in the first step of nitrate assimilation in plants, fungi and bacteria. In Beauveria bassiana (White muscardine disease fungus), this protein is Nitrate reductase [NADPH] (NIA).